Reading from the N-terminus, the 108-residue chain is MVTQKIYIELKAFDSCLLDRSARSIILTAKRSGARVNGPIFFPRKIMKFIVNRSTHVDKKSREQFEIRTHKRLISLPKANSTIIQALMSLQLPAGVDVKVKVIGGSNG.

It belongs to the universal ribosomal protein uS10 family. Part of the 30S ribosomal subunit.

Involved in the binding of tRNA to the ribosomes. The polypeptide is Small ribosomal subunit protein uS10 (Ehrlichia chaffeensis (strain ATCC CRL-10679 / Arkansas)).